The primary structure comprises 89 residues: Small ribosomal subunit protein uS15 (89 aa).

Belongs to the universal ribosomal protein uS15 family. Part of the 30S ribosomal subunit. Forms a bridge to the 50S subunit in the 70S ribosome, contacting the 23S rRNA.

In terms of biological role, one of the primary rRNA binding proteins, it binds directly to 16S rRNA where it helps nucleate assembly of the platform of the 30S subunit by binding and bridging several RNA helices of the 16S rRNA. Its function is as follows. Forms an intersubunit bridge (bridge B4) with the 23S rRNA of the 50S subunit in the ribosome. The sequence is that of Small ribosomal subunit protein uS15 from Pseudomonas entomophila (strain L48).